Reading from the N-terminus, the 401-residue chain is Phosphoglycerate kinase (401 aa).

Substrate is bound by residues 29-31 (DFN), arginine 45, 69-72 (HLGR), arginine 125, and arginine 158. Residues lysine 209, glutamate 331, and 357 to 360 (GGDT) each bind ATP.

This sequence belongs to the phosphoglycerate kinase family. As to quaternary structure, monomer.

It localises to the cytoplasm. The enzyme catalyses (2R)-3-phosphoglycerate + ATP = (2R)-3-phospho-glyceroyl phosphate + ADP. Its pathway is carbohydrate degradation; glycolysis; pyruvate from D-glyceraldehyde 3-phosphate: step 2/5. The polypeptide is Phosphoglycerate kinase (Wolinella succinogenes (strain ATCC 29543 / DSM 1740 / CCUG 13145 / JCM 31913 / LMG 7466 / NCTC 11488 / FDC 602W) (Vibrio succinogenes)).